Consider the following 625-residue polypeptide: tRNA uridine 5-carboxymethylaminomethyl modification enzyme MnmG (625 aa).

FAD-binding positions include 11-16 (GAGHAG), V123, and S178. Residue 271–285 (GPRYCPSIETKIVTF) participates in NAD(+) binding. Q368 provides a ligand contact to FAD.

Belongs to the MnmG family. Homodimer. Heterotetramer of two MnmE and two MnmG subunits. FAD is required as a cofactor.

The protein resides in the cytoplasm. Functionally, NAD-binding protein involved in the addition of a carboxymethylaminomethyl (cmnm) group at the wobble position (U34) of certain tRNAs, forming tRNA-cmnm(5)s(2)U34. This chain is tRNA uridine 5-carboxymethylaminomethyl modification enzyme MnmG, found in Bacteroides fragilis (strain YCH46).